We begin with the raw amino-acid sequence, 264 residues long: tRNA pseudouridine synthase A (264 aa).

D51 functions as the Nucleophile in the catalytic mechanism. Residue Y109 participates in substrate binding.

This sequence belongs to the tRNA pseudouridine synthase TruA family. In terms of assembly, homodimer.

The catalysed reaction is uridine(38/39/40) in tRNA = pseudouridine(38/39/40) in tRNA. In terms of biological role, formation of pseudouridine at positions 38, 39 and 40 in the anticodon stem and loop of transfer RNAs. The protein is tRNA pseudouridine synthase A of Vibrio vulnificus (strain CMCP6).